The sequence spans 217 residues: Protein TNT (217 aa).

Residues 1–217 (MSLVPGQHCS…HSTKQTGGKE (217 aa)) form a disordered region. Composition is skewed to polar residues over residues 20-36 (SPITMGTEPATQNTEFS) and 45-61 (TSPQRGHSQHSEASQGP). 2 stretches are compositionally biased toward low complexity: residues 91–104 (EPSLQSPSLELQSP) and 128–139 (QSSESHVSSVQH). Polar residues-rich tracts occupy residues 177-191 (RLNTQAASNQTSQLG) and 207-217 (AHSTKQTGGKE).

Preferentially expressed in teratocarcinoma rather than in normal testis.

In Homo sapiens (Human), this protein is Protein TNT (C16orf82).